A 189-amino-acid chain; its full sequence is HGPRTase-like protein (189 aa).

The protein belongs to the purine/pyrimidine phosphoribosyltransferase family. Archaeal HPRT subfamily.

May catalyze a purine salvage reaction, the substrate is unknown. The protein is HGPRTase-like protein of Halorhabdus utahensis (strain DSM 12940 / JCM 11049 / AX-2).